The sequence spans 453 residues: Ribose 1,5-bisphosphate phosphokinase PhnN (453 aa).

The disordered stretch occupies residues 1–21 (MHGSTGFVQGTRPAGDQADPL). Residues 1 to 271 (MHGSTGFVQG…SGQGERASLP (271 aa)) are unknown. The interval 272-453 (HSGRIFFCVG…KLLDILRQAK (182 aa)) is ribose 1,5-bisphosphokinase.

The protein in the C-terminal section; belongs to the ribose 1,5-bisphosphokinase family.

The enzyme catalyses alpha-D-ribose 1,5-bisphosphate + ATP = 5-phospho-alpha-D-ribose 1-diphosphate + ADP. It participates in metabolic intermediate biosynthesis; 5-phospho-alpha-D-ribose 1-diphosphate biosynthesis; 5-phospho-alpha-D-ribose 1-diphosphate from D-ribose 5-phosphate (route II): step 3/3. Catalyzes the phosphorylation of ribose 1,5-bisphosphate to 5-phospho-D-ribosyl alpha-1-diphosphate (PRPP). This is Ribose 1,5-bisphosphate phosphokinase PhnN (phnN) from Janthinobacterium sp. (strain Marseille) (Minibacterium massiliensis).